The sequence spans 155 residues: MSKVLEQVEAIVEPITNELQLELVDIAFEKEGPNWFLRIFIDKDGGVDIDECAAVSEKVSEKMDESDPITQNYFLEVSSPGAERPLKKEQDFENAVSKYVHVTSYEPIDGRKMWEGTLVSYDGTTLVITITDKTRKITCEIPKDKVAKARLAIQF.

It belongs to the RimP family.

It localises to the cytoplasm. Its function is as follows. Required for maturation of 30S ribosomal subunits. The polypeptide is Ribosome maturation factor RimP (Listeria welshimeri serovar 6b (strain ATCC 35897 / DSM 20650 / CCUG 15529 / CIP 8149 / NCTC 11857 / SLCC 5334 / V8)).